The following is a 131-amino-acid chain: Large ribosomal subunit protein uL22 (131 aa).

Belongs to the universal ribosomal protein uL22 family. Part of the 50S ribosomal subunit.

This protein binds specifically to 23S rRNA; its binding is stimulated by other ribosomal proteins, e.g. L4, L17, and L20. It is important during the early stages of 50S assembly. It makes multiple contacts with different domains of the 23S rRNA in the assembled 50S subunit and ribosome. In terms of biological role, the globular domain of the protein is located near the polypeptide exit tunnel on the outside of the subunit, while an extended beta-hairpin is found that lines the wall of the exit tunnel in the center of the 70S ribosome. This Phytoplasma mali (strain AT) protein is Large ribosomal subunit protein uL22.